Reading from the N-terminus, the 154-residue chain is Endoribonuclease YbeY (154 aa).

Residues histidine 117, histidine 121, and histidine 127 each coordinate Zn(2+).

The protein belongs to the endoribonuclease YbeY family. Zn(2+) is required as a cofactor.

It is found in the cytoplasm. Its function is as follows. Single strand-specific metallo-endoribonuclease involved in late-stage 70S ribosome quality control and in maturation of the 3' terminus of the 16S rRNA. This is Endoribonuclease YbeY from Polaromonas sp. (strain JS666 / ATCC BAA-500).